We begin with the raw amino-acid sequence, 1171 residues long: APC-related protein 1 (1171 aa).

A disordered region spans residues 1-54 (MSSSSSDENETTIHSSSNPGSSGIYSQLKAGSSKRPSVRHDVSDAEDDEEPYEG). Residues 1-481 (MSSSSSDENE…LSLRATRASP (481 aa)) are required for interaction with bar-1 and hmp-2. Over residues 15–26 (SSSNPGSSGIYS) the composition is skewed to low complexity. An ARM repeat occupies 312–356 (NCLKVLANILSPDARFTTLVDSASGILKYVSQYLATNSSHLELRS). Disordered regions lie at residues 587-617 (PVDDDLDIPTSTVMGTRSNSERSLGSMNPGS), 662-699 (HPEDNQMTTPPNHPSTQNTTHYSSGSANTMTRSDGTTV), 720-741 (RKTSEDLESPDDILPGPSLEVE), 767-822 (EEMP…EMTT), 837-936 (PRSR…TMRI), and 995-1030 (SSGSGSSLQKAETTAGSRDSGALATSTPIGSVSSLP). A required for interaction with pry-1 region spans residues 591–1171 (DLDIPTSTVM…NPKQMLVTIV (581 aa)). Composition is skewed to polar residues over residues 595–617 (PTSTVMGTRSNSERSLGSMNPGS) and 666–697 (NQMTTPPNHPSTQNTTHYSSGSANTMTRSDGT). Over residues 788 to 799 (FSPSQKTTSSPA) the composition is skewed to polar residues. Over residues 857–874 (EPDRSSHSKNEEADRRDA) the composition is skewed to basic and acidic residues. Composition is skewed to polar residues over residues 890–913 (RGSSPQQQQLHRMESLESQASSED) and 1002–1028 (LQKAETTAGSRDSGALATSTPIGSVSS).

This sequence belongs to the adenomatous polyposis coli (APC) family. Interacts (via N-terminus) with bar-1 and hmp-2; the interaction with hmp-2 is relatively weak. Interacts (via C-terminus) with pry-1 (via N-terminus). Probably associates with bar-1, gsk-3, pry-1 in a complex.

Its subcellular location is the cell junction. It is found in the adherens junction. The protein localises to the cytoplasm. The protein resides in the nucleus. Has a role in endoderm cell specification and pharyngeal development. Required for the migration of epithelial cells, organization of the anterior seam cells and ceh-13 expression during embryo morphogenesis. Prevents hyperactivation of the Wnt signaling pathway during endoderm development, probably by preventing hmp-2 nuclear translocation. During larval development, apr-1 is required for expression of lin-39 in P3-8.p. Shown to negatively regulate Wnt signaling in vulval precursor cells. Has a role in cell division by establishing the polarity of the mother cell which forms the asymmetries of the daughter nuclei. Thought to regulate export of wrm-1 from the nucleus possibly as part of a complex involving pry-1. In Caenorhabditis briggsae, this protein is APC-related protein 1.